Consider the following 156-residue polypeptide: Cyanate hydratase (156 aa).

Residues Arg-96, Glu-99, and Ser-122 contribute to the active site.

This sequence belongs to the cyanase family.

It carries out the reaction cyanate + hydrogencarbonate + 3 H(+) = NH4(+) + 2 CO2. Catalyzes the reaction of cyanate with bicarbonate to produce ammonia and carbon dioxide. This chain is Cyanate hydratase, found in Escherichia coli (strain K12 / DH10B).